Reading from the N-terminus, the 122-residue chain is UPF0102 protein cgR_1859 (122 aa).

The protein belongs to the UPF0102 family.

This is UPF0102 protein cgR_1859 from Corynebacterium glutamicum (strain R).